The primary structure comprises 152 residues: Ribosome maturation factor RimP (152 aa).

The protein belongs to the RimP family.

The protein resides in the cytoplasm. In terms of biological role, required for maturation of 30S ribosomal subunits. This Stutzerimonas stutzeri (strain A1501) (Pseudomonas stutzeri) protein is Ribosome maturation factor RimP.